We begin with the raw amino-acid sequence, 418 residues long: Putative competence-damage inducible protein (418 aa).

The protein belongs to the CinA family.

The chain is Putative competence-damage inducible protein from Streptococcus pneumoniae serotype 19F (strain G54).